Reading from the N-terminus, the 391-residue chain is Ethanol acetyltransferase 1 (391 aa).

The transit peptide at 1–24 (MFFTKVLNNQVANGLKQLPVHKRV) directs the protein to the mitochondrion. The region spanning 48-154 (PIVFVHGIFG…DNSPIEQPHI (107 aa)) is the AB hydrolase-1 domain. Active-site charge relay system residues include S121, D145, and H295.

This sequence belongs to the AB hydrolase superfamily.

The protein resides in the mitochondrion. The catalysed reaction is ethanol + acetyl-CoA = ethyl acetate + CoA. The enzyme catalyses acetyl-CoA + H2O = acetate + CoA + H(+). It catalyses the reaction ethyl acetate + H2O = ethanol + acetate + H(+). With respect to regulation, by ethanol. Thioesterase and esterase reactions are highly repressed in the presence of high ethanol concentrations. In terms of biological role, alcohol acetyltransferase that catalyzes the synthesis of ethyl acetate from ethanol and acetyl-CoA. Can also function as a thioesterase by hydrolyzing acetyl-CoA in the absence of ethanol, as well as esterase hydrolyzing ethyl acetate. This Wickerhamomyces anomalus (strain ATCC 58044 / CBS 1984 / NCYC 433 / NRRL Y-366-8) (Yeast) protein is Ethanol acetyltransferase 1 (EAT1).